A 380-amino-acid polypeptide reads, in one-letter code: Two-component response regulator ORR28 (380 aa).

One can recognise a Response regulatory domain in the interval 13–130; it reads SAMVIDEDKC…TIQNLWQHLD (118 aa). The residue at position 65 (aspartate 65) is a 4-aspartylphosphate. The segment at residues 169–223 is a DNA-binding region (myb-like GARP); it reads RKYYLMWTPHLQKKFLHALEILGEGQISLMIMDVDNIDRKQISTHLQKHRLQLKK. The tract at residues 225–245 is disordered; the sequence is LSKASFTKGSNEDTSNPSAKN. A compositionally biased stretch (polar residues) spans 228–245; the sequence is ASFTKGSNEDTSNPSAKN.

The protein belongs to the ARR family. Type-B subfamily. Post-translationally, two-component system major event consists of a His-to-Asp phosphorelay between a sensor histidine kinase (HK) and a response regulator (RR). In plants, the His-to-Asp phosphorelay involves an additional intermediate named Histidine-containing phosphotransfer protein (HPt). This multistep phosphorelay consists of a His-Asp-His-Asp sequential transfer of a phosphate group between first a His and an Asp of the HK protein, followed by the transfer to a conserved His of the HPt protein and finally the transfer to an Asp in the receiver domain of the RR protein.

It localises to the nucleus. Transcriptional activator that binds specific DNA sequence. Functions as a response regulator involved in His-to-Asp phosphorelay signal transduction system. Phosphorylation of the Asp residue in the receiver domain activates the ability of the protein to promote the transcription of target genes. May directly activate some type-A response regulators in response to cytokinins. The protein is Two-component response regulator ORR28 of Oryza sativa subsp. indica (Rice).